The primary structure comprises 70 residues: Large ribosomal subunit protein bL31 (70 aa).

4 residues coordinate Zn(2+): Cys16, Cys18, Cys37, and Cys40.

It belongs to the bacterial ribosomal protein bL31 family. Type A subfamily. Part of the 50S ribosomal subunit. Zn(2+) is required as a cofactor.

In terms of biological role, binds the 23S rRNA. This is Large ribosomal subunit protein bL31 from Klebsiella pneumoniae (strain 342).